Reading from the N-terminus, the 847-residue chain is Alanine--tRNA ligase (847 aa).

The Zn(2+) site is built by His554, His558, Cys656, and His660.

Belongs to the class-II aminoacyl-tRNA synthetase family. The cofactor is Zn(2+).

It is found in the cytoplasm. The enzyme catalyses tRNA(Ala) + L-alanine + ATP = L-alanyl-tRNA(Ala) + AMP + diphosphate. Its function is as follows. Catalyzes the attachment of alanine to tRNA(Ala) in a two-step reaction: alanine is first activated by ATP to form Ala-AMP and then transferred to the acceptor end of tRNA(Ala). Also edits incorrectly charged Ser-tRNA(Ala) and Gly-tRNA(Ala) via its editing domain. This chain is Alanine--tRNA ligase, found in Helicobacter acinonychis (strain Sheeba).